The primary structure comprises 336 residues: Ketoreductase adrE (336 aa).

Tyr-171 is an NADP(+) binding site.

This sequence belongs to the NAD(P)-dependent epimerase/dehydratase family. Dihydroflavonol-4-reductase subfamily.

Its pathway is secondary metabolite biosynthesis; terpenoid biosynthesis. In terms of biological role, ketoreductase; part of the gene cluster that mediates the biosynthesis of andrastins, meroterpenoid compounds that exhibit inhibitory activity against ras farnesyltransferase, suggesting that they could be promising leads for antitumor agents. The first step of the pathway is the synthesis of 3,5-dimethylorsellinic acid (DMOA) by the polyketide synthase adrD via condensation of one acetyl-CoA starter unit with 3 malonyl-CoA units and 2 methylations. DMAO is then converted to farnesyl-DMAO by the prenyltransferase adrG. The methyltransferase adrK catalyzes the methylation of the carboxyl group of farnesyl-DMAO to farnesyl-DMAO methyl ester which is further converted to epoxyfarnesyl-DMAO methyl ester by the FAD-dependent monooxygenase adrH. The terpene cyclase adrI then catalyzes the carbon skeletal rearrangement to generate the andrastin E, the first compound in the pathway having the andrastin scaffold, with the tetracyclic ring system. The post-cyclization tailoring enzymes adrF, adrE, adrJ, and adrA, are involved in the conversion of andrastin E into andrastin A. The short chain dehydrogenase adrF is responsible for the oxidation of the C-3 a hydroxyl group of andrastin E to yield the corresponding ketone, andrastin D. The ketoreductase adrE stereoselectively reduces the carbonyl moiety to reverse the stereochemistry of the C-3 position to yield andrastin F. The acetyltransferase adrJ is the acetyltransferase that attaches the acetyl group to the C-3 hydroxyl group of andrastin F to yield andrastin C. Finally, the cytochrome P450 monooxygenase adrA catalyzes two sequential oxidation reactions of the C-23 methyl group, to generate the corresponding alcohol andrastin B, and aldehyde andrastin A. This is Ketoreductase adrE from Penicillium rubens (strain ATCC 28089 / DSM 1075 / NRRL 1951 / Wisconsin 54-1255) (Penicillium chrysogenum).